The chain runs to 374 residues: Translocating chain-associated membrane protein 1 (374 aa).

The Cytoplasmic portion of the chain corresponds to 1 to 29; the sequence is MAIRKKSTKSPPVLSHEFVLQNHADIVSC. The chain crosses the membrane as a helical span at residues 30–50; the sequence is VAMVFLLGLMFEITAKASIIF. At 51–76 the chain is on the lumenal side; the sequence is VTLQYNVTLPATEEQATESVSLYYYG. Residue Asn-56 is glycosylated (N-linked (GlcNAc...) asparagine). Residues 77–97 form a helical membrane-spanning segment; it reads IKDLATVFFYMLVAIIIHAVI. The Cytoplasmic portion of the chain corresponds to 98 to 121; sequence QEYMLDKINRRMHFSKTKHSKFNE. The TLC domain occupies 117-326; that stretch reads SKFNESGQLS…NFQLRRWREH (210 aa). The chain crosses the membrane as a helical span at residues 122–142; it reads SGQLSAFYLFACVWGTFILIS. Residues 143–159 are Lumenal-facing; it reads ENYISDPTILWRAYPHN. Residues 160–180 traverse the membrane as a helical segment; that stretch reads LMTFQMKFFYISQLAYWLHAF. Residues 181-192 are Cytoplasmic-facing; sequence PELYFQKTKKED. A helical transmembrane segment spans residues 193 to 213; that stretch reads IPRQLVYIGLYLFHIAGAYLL. The Lumenal segment spans residues 214–217; that stretch reads NLNH. The chain crosses the membrane as a helical span at residues 218-238; the sequence is LGLVLLVLHYFVEFLFHISRL. Over 239–251 the chain is Cytoplasmic; sequence FYFSNEKYQKGFS. A helical membrane pass occupies residues 252–272; that stretch reads LWAVLFVLGRLLTLILSVLTV. Residues 273–297 lie on the Lumenal side of the membrane; that stretch reads GFGLARAENQKLDFSTGNFNVLAVR. Residues 298 to 318 form a helical membrane-spanning segment; the sequence is IAVLASICVTQAFMMWKFINF. Residues 319–374 are Cytoplasmic-facing; sequence QLRRWREHSAFQAPAVKKKPTVTKGRSSKKGTENGVNGTLTSNVADSPRNKKEKSS. The segment covering 334–347 has biased composition (basic residues); it reads VKKKPTVTKGRSSK. The disordered stretch occupies residues 334–374; that stretch reads VKKKPTVTKGRSSKKGTENGVNGTLTSNVADSPRNKKEKSS. The span at 352–363 shows a compositional bias: polar residues; it reads NGVNGTLTSNVA. Ser-365 carries the post-translational modification Phosphoserine.

The protein belongs to the TRAM family. As to quaternary structure, interacts with SEC61B. May interact with Derlin-1/DERL1. In terms of assembly, (Microbial infection) Interacts with human cytomegalovirus/HHV-5 proteins US2 and US11. In terms of processing, N-glycosylated.

It is found in the endoplasmic reticulum membrane. Its function is as follows. Involved in the translocation of nascent protein chains into or through the endoplasmic reticulum (ER) membrane by facilitating the proper chain positioning at the SEC61 channel. Regulates the exposure of nascent secretory protein chain to the cytosol during translocation into the ER. May affect the phospholipid bilayer in the vicinity of the lateral gate of the SEC61 channel, thereby facilitating ER protein transport. Intimately associates with transmembrane (TM) domain of nascent membrane proteins during the entire integration process into the ER membrane. Associates with the second TM domain of G-protein-coupled receptor opsin/OPSD nascent chain in the ER membrane, which may facilitate its integration into the membrane. Under conditions of ER stress, participates in the disposal of misfolded ER membrane proteins during the unfolded protein response (UPR), an integrated stress response (ISR) pathway, by selectively retrotranslocating misfolded ER-membrane proteins from the ER into the cytosol where they are ubiquitinated and degraded by the proteasome. (Microbial infection) In case of cytomegalovirus infection, participates in US2- and US11-mediated ER-to-cytosol retrotranslocation and subsequent degradation of major histocompatibility complex (MHC) class I heavy chains, thereby decreasing the immune detection by cytotoxic T-cells. The chain is Translocating chain-associated membrane protein 1 from Homo sapiens (Human).